The sequence spans 158 residues: MSSAIERKSLDPSEEPVDEVLQIPPSLLTCGGCQQNIGDRYFLKAIDQYWHEDCLSCDLCGCRLGEVGRRLYYKLGRKLCRRDYLRLFGQDGLCASCDKRIRAYEMTMRVKDKVYHLECFKCAACQKHFCVGDRYLLINSDIVCEQDIYEWTKINGMI.

LIM zinc-binding domains follow at residues 30–89 (CGGC…RLFG) and 94–153 (CASC…EWTK).

As to quaternary structure, interacts via its LIM domains with ELF2 and LDB1. Also interacts with basic helix-loop-helix protein TAL1/SCL and can assemble in a complex with LMO2 and TAL1/SCL. Interacts with BEX2 and KDM5A.

It is found in the nucleus. Functionally, acts with TAL1/SCL to regulate red blood cell development. Also acts with LDB1 to maintain erythroid precursors in an immature state. This chain is Rhombotin-2 (LMO2), found in Homo sapiens (Human).